The primary structure comprises 184 residues: Photosystem I assembly protein Ycf4 (184 aa).

2 consecutive transmembrane segments (helical) span residues Ile19–Gly39 and Ile57–Ser77.

Belongs to the Ycf4 family.

The protein resides in the plastid. Its subcellular location is the chloroplast thylakoid membrane. Functionally, seems to be required for the assembly of the photosystem I complex. This Drimys granadensis protein is Photosystem I assembly protein Ycf4.